A 68-amino-acid polypeptide reads, in one-letter code: Cytotoxic linear peptide (68 aa).

The first 23 residues, 1–23 (MKTQFAILLIALVLFQMFSQSEA), serve as a signal peptide directing secretion. Leucine 36 is subject to Leucine amide. Positions 40-68 (GLNELDDLDELFDGEISQADIDFLKELMS) are excised as a propeptide.

This sequence belongs to the non-disulfide-bridged peptide (NDBP) superfamily. Short antimicrobial peptide (group 4) family. In terms of tissue distribution, expressed by the venom gland.

Its subcellular location is the secreted. It localises to the target cell membrane. In terms of biological role, amphipathic peptide that has antibacterial activities. The chain is Cytotoxic linear peptide from Pandinus cavimanus (Tanzanian red clawed scorpion).